Reading from the N-terminus, the 491-residue chain is Glutamyl-tRNA(Gln) amidotransferase subunit A (491 aa).

Active-site charge relay system residues include lysine 79 and serine 154. Catalysis depends on serine 178, which acts as the Acyl-ester intermediate.

This sequence belongs to the amidase family. GatA subfamily. As to quaternary structure, heterotrimer of A, B and C subunits.

It catalyses the reaction L-glutamyl-tRNA(Gln) + L-glutamine + ATP + H2O = L-glutaminyl-tRNA(Gln) + L-glutamate + ADP + phosphate + H(+). Functionally, allows the formation of correctly charged Gln-tRNA(Gln) through the transamidation of misacylated Glu-tRNA(Gln) in organisms which lack glutaminyl-tRNA synthetase. The reaction takes place in the presence of glutamine and ATP through an activated gamma-phospho-Glu-tRNA(Gln). This chain is Glutamyl-tRNA(Gln) amidotransferase subunit A, found in Synechococcus sp. (strain CC9605).